The following is a 1530-amino-acid chain: Regulating synaptic membrane exocytosis protein 2 (1530 aa).

Residues 1–34 (MSAPLGPRGRPAPTPAASQPPPQPEMPDLSHLTE) are disordered. Residues 10 to 25 (RPAPTPAASQPPPQPE) show a composition bias toward pro residues. The region spanning 26–194 (MPDLSHLTEE…TKSGAWFYNS (169 aa)) is the RabBD domain. The segment at 126-182 (KGDAPTCGICHKTKFADGCGHNCSYCQTKFCARCGGRVSLRSNKVMWVCNLCRKQQE) adopts an FYVE-type zinc-finger fold. Zn(2+) is bound by residues Cys132, Cys135, Cys148, Cys151, Cys156, Cys159, Cys174, and Cys177. Disordered stretches follow at residues 195-608 (GSNT…ERQK) and 632-655 (SGVDTCSSTTLNEEHSHSDKHPVT). 5 stretches are compositionally biased toward basic and acidic residues: residues 210–225 (LRNEEAPQEKKAKLHE), 327–338 (EPGHLNYRDSNR), 357–375 (RDEYERQRREEEYQARYRS), 391–410 (EQMRIHAEVSRARHERRHSD), and 419–443 (EDSRISLLRMDRPSRQRSVSERRAA). Ser409 is subject to Phosphoserine. Polar residues predominate over residues 458–472 (AQGQSSYPQRTSNHS). The segment covering 484–501 (DRPDMRRADSLRKQHHLD) has biased composition (basic and acidic residues). The span at 519–530 (RNDSLSSDQSES) shows a compositional bias: polar residues. Positions 537–546 (RPHKSKKGGK) are enriched in basic residues. The span at 567-577 (SCDDVELESES) shows a compositional bias: acidic residues. 2 stretches are compositionally biased toward basic and acidic residues: residues 578 to 592 (VSEKGDSQKGKRKTS) and 643 to 653 (NEEHSHSDKHP). The region spanning 677–763 (DGSVPRDSGA…EPQVELVVSR (87 aa)) is the PDZ domain. Thr698 is subject to Phosphothreonine. The interval 771–802 (IPDSTHAQLESSSSSFESQKMDRPSISVTSPM) is disordered. Phosphoserine occurs at positions 800 and 803. In terms of domain architecture, C2 1 spans 814 to 937 (LSGQLSIKLW…ALLDDEPHWY (124 aa)). Disordered regions lie at residues 948–982 (PLPRPSPYLPRRQLHGESPTRRLQRSKRISDSEVS), 1003–1122 (LQSS…ERSA), 1130–1149 (RQMKLNKYKQVAGSDPRLEQ), 1154–1187 (KYRSGWDPHRGADTVSTKSSDSDVSDVSAVSRTS), 1242–1263 (SLEKNDGSQSDTAVGALGTSGK), and 1282–1307 (KSRSASQLSQTEGGGKKLRSTVQRST). Residues 1003-1024 (LQSSTLSVPEQVMSSNHCSPSG) are compositionally biased toward polar residues. Residues 1067-1086 (RMDRHRVMDDHYSSDRDRSH) are compositionally biased toward basic and acidic residues. The span at 1088-1101 (RTGSVQTSPSSTPG) shows a compositional bias: polar residues. Phosphoserine is present on Ser1095. The segment covering 1154–1165 (KYRSGWDPHRGA) has biased composition (basic and acidic residues). Position 1175 is a phosphoserine (Ser1175). The segment covering 1178 to 1187 (SDVSAVSRTS) has biased composition (low complexity). Position 1251 is a phosphoserine (Ser1251). In terms of domain architecture, C2 2 spans 1376-1494 (AMGDIQVGMM…ELSNMVIGWF (119 aa)). Phosphoserine occurs at positions 1515 and 1518.

As to quaternary structure, interacts with TSPOAP1 and RIMBP2. Interacts with PPFIA3 and PPFIA4. Interacts via its zinc finger with the first C2 domain of UNC13A. Forms a complex consisting of UNC13A, RIMS2 and RAB3A. Heterodimer with PCLO. Part of a ternary complex involving PCLO and EPAC2. Interacts with RAB3A and RAB3B that have been activated by GTP-binding. Interacts with RAB3C, RAB3D and RAB26. As to expression, detected in testis, pituitary and an insulinoma cell line. Detected at low levels in cerebellar cortex.

It is found in the synapse. The protein resides in the synaptosome. Its function is as follows. Rab effector involved in exocytosis. May act as scaffold protein. Plays a role in dendrite formation by melanocytes. The sequence is that of Regulating synaptic membrane exocytosis protein 2 (Rims2) from Mus musculus (Mouse).